Here is a 411-residue protein sequence, read N- to C-terminus: Putative polysaccharide ligase RC0486 (411 aa).

A run of 10 helical transmembrane segments spans residues 15–35 (LGMLAGLSAAATVTIFLLISF), 78–98 (GITMLFTAWCFISCLFAIHLI), 101–121 (LATFTQVFILLFLGFAVSNSA), 133–153 (LIFGILTAILLFFIEYSSNGF), 166–186 (MLDRGCALLSITAWVAIIILL), 207–227 (ISDSLASFLGFGIGGVIFILT), 233–253 (IFFKLIAISLITGSLLFPVIA), 328–348 (ILQITLELGIIGLILFLCLVY), 361–381 (NFKAISYACFINYYIIGMISY), and 383–403 (IWQIWWISSGIWVLVLMKLLV).

The protein belongs to the O-antigen ligase family.

Its subcellular location is the membrane. The sequence is that of Putative polysaccharide ligase RC0486 from Rickettsia conorii (strain ATCC VR-613 / Malish 7).